The sequence spans 219 residues: Envelope protein US9 homolog (219 aa).

The Intravirion portion of the chain corresponds to 1 to 193 (MEKAEAAAVV…RHRRRRVALT (193 aa)). Positions 145-146 (LL) match the Di-leucine internalization motif motif. The segment at 153-168 (DYDSESGCYYSESDNE) is acidic. Ser163 and Ser165 each carry phosphoserine; by host CK2. A helical; Signal-anchor for type II membrane protein transmembrane segment spans residues 194 to 214 (VAGVILVVVLCAISGIVGAFL). Residues 215–219 (ARVFP) lie on the Virion surface side of the membrane.

It belongs to the alphaherpesvirinae envelope protein US9 family. Phosphorylated on serines within the acidic cluster. Phosphorylation determines whether endocytosed viral US9 traffics to the trans-Golgi network or recycles to the cell membrane.

Its subcellular location is the virion membrane. The protein resides in the host Golgi apparatus membrane. The protein localises to the host smooth endoplasmic reticulum membrane. It is found in the host cell membrane. In terms of biological role, essential for the anterograde spread of the infection throughout the host nervous system. Together with the gE/gI heterodimer, US9 is involved in the sorting and transport of viral structural components toward axon tips. The chain is Envelope protein US9 homolog from Equine herpesvirus 1 (strain Ab4p) (EHV-1).